We begin with the raw amino-acid sequence, 175 residues long: CASP-like protein 2C1 (175 aa).

Residues 1–7 (MVRLRET) are Cytoplasmic-facing. A helical transmembrane segment spans residues 8-28 (EVILRLCIVFFILLSSCLIGL). Residues 29-51 (DSQTKEIAYIHKKVSFRYLLALE) lie on the Extracellular side of the membrane. Residues 52 to 72 (AELYINVVVAAYNLVQIGLGW) traverse the membrane as a helical segment. Over 73–91 (YNVEQKTSNPKWFSYLLDQ) the chain is Cytoplasmic. A helical transmembrane segment spans residues 92 to 112 (TAAYVVFAGTSAAAQHSLLVV). Over 113–136 (TGSRELQWMKWCYKFTRFCFQMGS) the chain is Extracellular. Residues 137–157 (AIILNYIAAALMVLLSSISAF) form a helical membrane-spanning segment. Topologically, residues 158-175 (NLFRLYSPKRFFSFKSSS) are cytoplasmic.

It belongs to the Casparian strip membrane proteins (CASP) family. Homodimer and heterodimers.

It localises to the cell membrane. The chain is CASP-like protein 2C1 from Arabidopsis lyrata subsp. lyrata (Lyre-leaved rock-cress).